The following is a 65-amino-acid chain: UPF0434 protein RPD_0454 (65 aa).

Belongs to the UPF0434 family.

In Rhodopseudomonas palustris (strain BisB5), this protein is UPF0434 protein RPD_0454.